We begin with the raw amino-acid sequence, 293 residues long: Acetyl-coenzyme A carboxylase carboxyl transferase subunit beta (293 aa).

The CoA carboxyltransferase N-terminal domain maps to 29 to 293 (LWSKCPECGL…GSKSLELTNA (265 aa)). Zn(2+) contacts are provided by Cys-33, Cys-36, Cys-52, and Cys-55. A C4-type zinc finger spans residues 33–55 (CPECGLVVYLKDLRLNASVCAGC).

The protein belongs to the AccD/PCCB family. As to quaternary structure, acetyl-CoA carboxylase is a heterohexamer composed of biotin carboxyl carrier protein (AccB), biotin carboxylase (AccC) and two subunits each of ACCase subunit alpha (AccA) and ACCase subunit beta (AccD). Requires Zn(2+) as cofactor.

It localises to the cytoplasm. The catalysed reaction is N(6)-carboxybiotinyl-L-lysyl-[protein] + acetyl-CoA = N(6)-biotinyl-L-lysyl-[protein] + malonyl-CoA. Its pathway is lipid metabolism; malonyl-CoA biosynthesis; malonyl-CoA from acetyl-CoA: step 1/1. Component of the acetyl coenzyme A carboxylase (ACC) complex. Biotin carboxylase (BC) catalyzes the carboxylation of biotin on its carrier protein (BCCP) and then the CO(2) group is transferred by the transcarboxylase to acetyl-CoA to form malonyl-CoA. The chain is Acetyl-coenzyme A carboxylase carboxyl transferase subunit beta from Synechococcus sp. (strain CC9902).